The sequence spans 520 residues: AMP-binding domain-containing enzyme iboA (520 aa).

180-191 (LTSGSTSGSPKV) lines the ATP pocket. Residues 397–447 (DGNFHTGDLFEKQLDGSYLFRGRGDDWIKSEDSRFIDTKAIEEKINDVCSD) carry the FACS motif.

It belongs to the ATP-dependent AMP-binding enzyme family. The cofactor is Mg(2+).

It participates in secondary metabolite biosynthesis. In terms of biological role, AMP-binding domain-containing enzyme; part of the gene cluster that mediates the biosynthesis of the psychoactive metabolites ibotenic acid and muscimol. The first committed step is glutamate hydroxylation by the 2-oxoglutarate-dependent dioxygenase iboH, and the last step is decarboxylation of ibotenic acid to muscimol by the decarboxylase iboD. The order of the intermediate reactions is somewhat ambiguous. IboA likely activates the carboxylic acid at position 5 to introduce an amide bond, and the flavin monooxygenase iboF generates the N-O bond. There are several options for the latter step. One option is that iboF directly hydroxylates the amide nitrogen formed by iboA to produce a hydroxamic acid species. Another option is that iboF hydroxylates an external N-containing compound, whose resulting N-O bond is subsequently introduced into the hydroxyglutamate scaffold. The paralogous PLP-dependent cystathionine gamma-synthase-like enzymes iboG1 and iboG2 are likely involved in substitution of the OH group at position 3 by the O-N moiety. The first cyclic intermediate is most probably tricholomic acid which is likely desaturated to ibotenic acid by the cytochrome P450 monooxygenase iboC. The protein is AMP-binding domain-containing enzyme iboA of Amanita muscaria (strain Koide BX008).